The following is a 227-amino-acid chain: MNSIEFPLLDQIAQNSVISTTSNDLSNWSRLSSLWPLLYGTSCCFIEFASLIGSRFDFDRYGLVPRASPRQADLILTAGTVTMKMAPSLLRLYEQMPEPKYVIAMGACTITGGMFSTDSYSTVRGVDKLIPVDVYLPGCPPKPEAVIDAITKLRKKISREIYEDRIKSQPKNRCFTINHKFRVGRSIHTGNYDQALLYKYKSPSTSEIPPETFFKYKNAASSRELVN.

[4Fe-4S] cluster contacts are provided by C43, C44, C108, and C139.

This sequence belongs to the complex I 20 kDa subunit family. In terms of assembly, NDH is composed of at least 16 different subunits, 5 of which are encoded in the nucleus. The cofactor is [4Fe-4S] cluster.

It is found in the plastid. The protein localises to the chloroplast thylakoid membrane. The catalysed reaction is a plastoquinone + NADH + (n+1) H(+)(in) = a plastoquinol + NAD(+) + n H(+)(out). It catalyses the reaction a plastoquinone + NADPH + (n+1) H(+)(in) = a plastoquinol + NADP(+) + n H(+)(out). Its function is as follows. NDH shuttles electrons from NAD(P)H:plastoquinone, via FMN and iron-sulfur (Fe-S) centers, to quinones in the photosynthetic chain and possibly in a chloroplast respiratory chain. The immediate electron acceptor for the enzyme in this species is believed to be plastoquinone. Couples the redox reaction to proton translocation, and thus conserves the redox energy in a proton gradient. In Spinacia oleracea (Spinach), this protein is NAD(P)H-quinone oxidoreductase subunit K, chloroplastic.